Here is a 79-residue protein sequence, read N- to C-terminus: Large ribosomal subunit protein uL29 (79 aa).

Belongs to the universal ribosomal protein uL29 family.

In Gluconacetobacter diazotrophicus (strain ATCC 49037 / DSM 5601 / CCUG 37298 / CIP 103539 / LMG 7603 / PAl5), this protein is Large ribosomal subunit protein uL29.